The following is a 188-amino-acid chain: Gag polyprotein (188 aa).

Over residues 77–90 (VGETTVQRDAKMAP) the composition is skewed to basic and acidic residues. Positions 77–99 (VGETTVQRDAKMAPEETATPKTV) are disordered. The PPXY motif signature appears at 121–124 (PPPY). Residues 130–166 (YPSLAGVGEQQGQGGDTPRGAEQPRAEPGHAGLAPGP) form a disordered region.

Post-translationally, specific enzymatic cleavages in vivo yield mature proteins.

It localises to the virion. This Galliformes (EV-2) protein is Gag polyprotein (ev-2).